Here is a 301-residue protein sequence, read N- to C-terminus: uncharacterized protein (301 aa).

Residues 1-26 (MKGFSCSRPGYLTGLLLLAVAPILTA) form the signal peptide. Cys-27 is lipidated: N-palmitoyl cysteine. Residue Cys-27 is the site of S-diacylglycerol cysteine attachment. In terms of domain architecture, TNase-like spans 46-243 (KLKPATIEYW…YNAKINIWSH (198 aa)). Residues 64–136 (NYASEERRKE…SKGDSTGDEK (73 aa)) are disordered. Basic and acidic residues-rich tracts occupy residues 67–95 (SEER…KTED) and 120–136 (TPEK…GDEK).

Its subcellular location is the cell membrane. This is an uncharacterized protein from Mycoplasma pneumoniae (strain ATCC 29342 / M129 / Subtype 1) (Mycoplasmoides pneumoniae).